Reading from the N-terminus, the 82-residue chain is Small ribosomal subunit protein uS17 (82 aa).

This sequence belongs to the universal ribosomal protein uS17 family. Part of the 30S ribosomal subunit.

One of the primary rRNA binding proteins, it binds specifically to the 5'-end of 16S ribosomal RNA. In Aeromonas hydrophila subsp. hydrophila (strain ATCC 7966 / DSM 30187 / BCRC 13018 / CCUG 14551 / JCM 1027 / KCTC 2358 / NCIMB 9240 / NCTC 8049), this protein is Small ribosomal subunit protein uS17.